Reading from the N-terminus, the 59-residue chain is Large ribosomal subunit protein eL29 (59 aa).

The segment covering 1 to 26 (MAKSKNHTAHNQTRKAHRNGIKKPKT) has biased composition (basic residues). The tract at residues 1-37 (MAKSKNHTAHNQTRKAHRNGIKKPKTYKYPSLKGVDP) is disordered. Lys-52 is covalently cross-linked (Glycyl lysine isopeptide (Lys-Gly) (interchain with G-Cter in ubiquitin)).

This sequence belongs to the eukaryotic ribosomal protein eL29 family. Component of the large ribosomal subunit (LSU). Mature yeast ribosomes consist of a small (40S) and a large (60S) subunit. The 40S small subunit contains 1 molecule of ribosomal RNA (18S rRNA) and 33 different proteins (encoded by 57 genes). The large 60S subunit contains 3 rRNA molecules (25S, 5.8S and 5S rRNA) and 46 different proteins (encoded by 81 genes).

The protein resides in the cytoplasm. Functionally, component of the ribosome, a large ribonucleoprotein complex responsible for the synthesis of proteins in the cell. The small ribosomal subunit (SSU) binds messenger RNAs (mRNAs) and translates the encoded message by selecting cognate aminoacyl-transfer RNA (tRNA) molecules. The large subunit (LSU) contains the ribosomal catalytic site termed the peptidyl transferase center (PTC), which catalyzes the formation of peptide bonds, thereby polymerizing the amino acids delivered by tRNAs into a polypeptide chain. The nascent polypeptides leave the ribosome through a tunnel in the LSU and interact with protein factors that function in enzymatic processing, targeting, and the membrane insertion of nascent chains at the exit of the ribosomal tunnel. This chain is Large ribosomal subunit protein eL29, found in Saccharomyces cerevisiae (strain ATCC 204508 / S288c) (Baker's yeast).